Reading from the N-terminus, the 311-residue chain is Transcriptional regulatory protein MoaR1 (311 aa).

Residues 15–117 (LNATTAGAVQ…SEPPGYRLLI (103 aa)) constitute a DNA-binding region (ompR/PhoB-type).

The protein belongs to the AfsR/DnrI/RedD regulatory family.

Acts as a positive transcriptional regulator of the molybdopterin biosynthesis moa1 locus, promoting the expression of the moaA1B1C1D1 genes. The sequence is that of Transcriptional regulatory protein MoaR1 (moaR1) from Mycobacterium bovis (strain BCG / Pasteur 1173P2).